We begin with the raw amino-acid sequence, 519 residues long: Exodeoxyribonuclease 7 large subunit (519 aa).

Belongs to the XseA family. Heterooligomer composed of large and small subunits.

It localises to the cytoplasm. It catalyses the reaction Exonucleolytic cleavage in either 5'- to 3'- or 3'- to 5'-direction to yield nucleoside 5'-phosphates.. Bidirectionally degrades single-stranded DNA into large acid-insoluble oligonucleotides, which are then degraded further into small acid-soluble oligonucleotides. This chain is Exodeoxyribonuclease 7 large subunit, found in Cereibacter sphaeroides (strain ATCC 17025 / ATH 2.4.3) (Rhodobacter sphaeroides).